The primary structure comprises 1035 residues: MKMASTRCKLARYLEDLEDVDLKKFKMHLEDYPPQKGCISLPRGQTEKADHVDLATLMIDFNGEEKAWAMAVWIFAAINRRDLYEKAKRDEPKWGSDNARVSNPTVICQEDSIEEEWMGLLEYLSRISICKKKKDYCKKYRKYVRSRFQCIEDRNARLGESVSLNKRYTRLRLIKEHRSQQEREHELLAIGKTKTWESPVSPIKMELLFDPDDEHSEPVHTVVFQGAAGIGKTILARKIMLDWASGTLYQDRFDYLFYIHCREVSLVTQRSLGDLIMSCCPDPNPPIRKIVSKPSRILFLMDGFDELQGAFDEHIGPLCTDWQKAERGDILLSSLIRKKLLPEASLLITTRPVALEKLQHLLDHPRHVEILGFSEAKRKEYFFKYFSDEAQARAAFSLIQENEVLFTMCFIPLVCWIVCTGLKQQMESGKSLAQTSKTTTAVYTFFLSSLLQPRGGSQEHRLCAHLWGLCSLAADGIWNQKILFEESDLRNHGLQKADVSAFLRMNLFQKEVDCEKFYSFIHMTFQEFFAAMYYLLEEEKEGRTNVPGSCLKLPSRDVTVLLENYGKFEKGYLIFVVRFLFGLVNQERTCYLEKKLSCKISQQIRLELLKWIEVKAKAKKLQIQPSQLELFYCLYEMQEEDFVQRAMDYFPKIEINLSTRMDHVVSSFCIENCHRVESLSLGFLHNMPKEEEEEEKEGRHLDMVQCVLPGSHAACSHRLVNSHLTSSFCRGLFSVLSTSQSLTELDLSDNSLGDPGMRVLCETLQHPDCNIRRLWLGRCGLSHECCFDISLVLSSNQKLVELDLSDNALGDFGIRLLCVGLKHLLCNLKKLWLVSCCLTSACCQDLASVLSTSRSLTRLYVGENALGDAGVAILCEKAKNPQCNLQKLGLVNSGLTSACCSALSSVLSTNQNLTHLYLRGNTLGDKGIKLLCEGLLHPDCKLQVLELDNCNLTSHCCWDLSTLLTSSQSLRKLSLGNNDLGDLGVMMFCEVLKQQSCLLQNLGLSEMYFNYETKSALETLQEEKPELTIVFEPSW.

The Pyrin domain occupies 1–93 (MKMASTRCKL…YEKAKRDEPK (93 aa)). S5 bears the Phosphoserine mark. C8 and C108 are disulfide-bonded. Residue Y13 is modified to Phosphotyrosine. Residue C130 is the site of S-palmitoyl cysteine attachment. Residues 131 to 134 (KKKK) are required for binding to phosphatidylinositol 4-phosphate (PtdIns4P). Y136, Y140, and Y143 each carry phosphotyrosine. One can recognise an FISNA domain in the interval 140-210 (YRKYVRSRFQ…SPIKMELLFD (71 aa)). Phosphoserine is present on residues S161 and S163. At Y168 the chain carries Phosphotyrosine. T169 provides a ligand contact to ATP. A phosphoserine mark is found at S198 and S201. In terms of domain architecture, NACHT spans 220 to 536 (HTVVFQGAAG…EFFAAMYYLL (317 aa)). Residue 226–233 (GAAGIGKT) coordinates ATP. A phosphoserine mark is found at S265 and S295. K324 participates in a covalent cross-link: Glycyl lysine isopeptide (Lys-Gly) (interchain with G-Cter in ubiquitin). S334 carries the phosphoserine modification. The KFERQ-like motif 1 signature appears at 355 to 359 (LEKLQ). Residue K430 forms a Glycyl lysine isopeptide (Lys-Gly) (interchain with G-Cter in ubiquitin) linkage. ATP is bound at residue H522. A KFERQ-like motif 2 motif is present at residues 603–607 (QIRLE). A Glycyl lysine isopeptide (Lys-Gly) (interchain with G-Cter in ubiquitin) cross-link involves residue K689. Residues S727 and S734 each carry the phosphoserine modification. 5 LRR repeats span residues 741–761 (SLTE…RVLC), 770–791 (NIRR…DISL), 798–818 (KLVE…RLLC), 827–848 (NLKK…DLAS), and 855–875 (SLTR…AILC). The short motif at 797 to 801 (QKLVE) is the KFERQ-like motif 3 element. S805 bears the Phosphoserine mark. 3 S-palmitoyl cysteine lipidation sites follow: C836, C837, and C843. Y860 is subject to Phosphotyrosine. K877 participates in a covalent cross-link: Glycyl lysine isopeptide (Lys-Gly) (interchain with G-Cter in ubiquitin). LRR repeat units follow at residues 884 to 905 (NLQK…ALSS), 912 to 932 (NLTH…KLLC), 941 to 962 (KLQV…DLST), and 969 to 990 (SLRK…MFCE). K926 is covalently cross-linked (Glycyl lysine isopeptide (Lys-Gly) (interchain with G-Cter in ubiquitin)). A lipid anchor (S-palmitoyl cysteine) is attached at C957. K972 participates in a covalent cross-link: Glycyl lysine isopeptide (Lys-Gly) (interchain with G-Cter in ubiquitin). Phosphoserine is present on S974. The KFERQ-like motif 4 signature appears at 990-994 (EVLKQ). S1034 carries the phosphoserine modification.

This sequence belongs to the NLRP family. As to quaternary structure, sensor component of NLRP3 inflammasomes; inflammasomes are supramolecular complexes that assemble in the cytosol in response to pathogens and other damage-associated signals and play critical roles in innate immunity and inflammation. The core of NLRP3 inflammasomes consists of a signal sensor component (NLRP3), an adapter (PYCARD/ASC), which recruits an effector pro-inflammatory caspase (CASP1 and, possibly, CASP4 and CASP5). Homodecamer; inactive NLRP3 forms homodecameric double-ring cages that hide pyrin domains within NACHT-LRR rings to avoid premature activation. Interacts (via pyrin domain) with PYCARD/ASC (via pyrin domain); interaction is direct. Interacts (via LRR repeat domain) with NEK7 (via N-terminus); the interaction is required for the formation of the complex NLRP3:PYCARD, oligomerization of PYCARD/ASC and activation of CASP1. Interacts (via LRR repeat domain) with NR4A1/Nur77 (via N-terminus); the interaction is direct, requires activation of NR4A1 by its ligands NBRE-containing dsDNA and lipopolysaccharide, and stimulates the association of NLRP3 with NEK7 for non-canonical NLRP3 inflammasome activation. Interacts with CARD8; leading to inhibit formation of the NLRP3 inflammasome. Interacts with MEFV; this interaction targets NLRP3 to degradation by autophagy, hence preventing excessive IL1B- and IL18-mediated inflammation. Interacts with EIF2AK2/PKR; this interaction requires EIF2AK2 activity, is accompanied by EIF2AK2 autophosphorylation and promotes inflammasome assembly in response to specific stimuli. Interacts with GBP5 (via DAPIN domain); this interaction promotes inflammasome assembly in response to microbial and soluble, but not crystalline, agents. Interacts with PML (isoform PML-1) (via the leucine-rich repeat (LRR) domain); PML-mediated increase in NLRP3 inflammasome activation does not depend upon this interaction. Interacts (via NACHT domain) with DHX33 (via DEAH box); NLRP3 activation in presence of cytosolic dsRNA is mediated by DHX33. Interacts (via NACHT and LRR domains) with ARRB2; this interaction is direct and inducible by polyunsaturated fatty acids (PUFAs). Interacts (via NACHT domain) with DDX3X under both LPS-primed and inflammasome-activating conditions. Interacts with IRF4 (via the LRR domain); this interaction is direct and is required for optimal IRF4 binding to IL4 promoter and efficient IL4 transactivation during differentiation of Th2 helper T-cells. Interacts with MAVS; promoting localization to mitochondria and activation of the NLRP3 inflammasome. Interacts with MARK4; promoting localization of NLRP3 to the microtubule organizing center (MTOC). Interacts with TRIM50; this interaction also promotes NLRP3 oligomerization and subsequent inflammasome activation. Interacts with IRGM; preventing NLRP3 inflammasome assembly and promoting NLRP3 degradation. Interacts (via KFERQ-like motifs) with HSPA8/HSC70; promoting NLRP3 degradation by the chaperone-mediated autophagy pathway. Interacts (via NACHT and LLR domains) with ABHD8; this interaction is enhanced in the presence of NLRP3 inflammasome inducers, such as ATP, nigericin, silica, or alum. Interaction with ABHD8 leads the recruitment of ZDHHC12, hence facilitating NLRP3 palmitoylation and degradation by the chaperone-mediated autophagy pathway (CMA), therefore attenuating NLRP3 inflammasome activation. Post-translationally, the disulfide bond in the pyrin domain might play a role in reactive oxygen species-mediated activation. Phosphorylation at Ser-198 by MAPK8/JNK1 increases inflammasome activation by promoting deubiquitination by BRCC3 and NLRP3 homooligomerization. Phosphorylation at Ser-805 by CSNK1A1 prevents inflammasome activation by preventing NEK7 recruitment. Phosphorylation at Ser-5 in the pyrin domain inhibits homomultimerization of NLRP3 and activation of the NLRP3 inflammasome: dephosphorylation by protein phosphatase 2A (PP2A) promotes assembly of the NLRP3 inflammasome. Phosphorylation at Ser-295 by PKD/PRKD1 promotes NLRP3 inflammasome assembly. Phosphorylation by ERK1/MAPK3 promotes NLRP3 inflammasome assembly. Phosphorylation by BTK (at Tyr-136, Tyr-140, Tyr-143 and Tyr-168) in the region that mediates binding to phosphatidylinositol phosphate, promotes relocalization of NLRP3 and assembly of the NLRP3 inflammasome. Phosphorylation at Tyr-860 inhibits NLRP3 inflammasome assembly: dephosphorylation by PTPN22 promotes inflammasome activation. Phosphorylated by LATS1 and LATS2 at Ser-265 following palmitoylation by ZDHHC1, promoting its relocalization to the microtubule organizing center (MTOC), where NLRP3 is activated by NEK7, leading to inflammasome assembly and activation. In terms of processing, ubiquitinated; undergoes both 'Lys-48'- and 'Lys-63'-linked polyubiquitination. Ubiquitination does not lead to degradation, but inhibits inflammasome activation. Deubiquitination is catalyzed by BRCC3 and associated with NLRP3 activation and inflammasome assembly. This process can be induced by the activation of Toll-like receptors (by LPS), through a non-transcriptional pathway dependent on the mitochondrial production of reactive oxygen species, and by ATP. Ubiquitinated by TRIM31 via 'Lys-48'-linked ubiquitination, leading to its degradation by the proteasome. Ubiquitinated at Lys-689 by the SCF(FBXL2) complex, leading to its degradation by the proteasome. Ubiquitinated by TRIM35 via 'lys-48' and 'Lys-63'-linked ubiquitination leading to inhibition of NLRP3 inflammasome activation. Undergoes 'Lys-27'-linked polyubiquitination by MARCHF5, leading to NLRP3-NEK7 complex formation and NLRP3 oligomerization. Post-translationally, palmitoylation by ZDHHC12 promotes NLRP3 degradation by the chaperone-mediated autophagy pathway (CMA) and therefore limits NLRP3 inflammasome activation. Interaction with ZDHHC12, and hence NLRP3 palmitoylation, is greatly enhanced by ABHD8. Following palmitoylation, HSPA8/HSC70 recognizes and binds the KFERQ-like motifs on NLRP3 and promotes NLRP3 recruitment to lysosomes, where it is degraded via the chaperone-mediated autophagy pathway in a LAMP2-dependent process. Palmitoylation at Cys-836 and Cys-837 by ZDHHC5 enhances its binding to NEK7 leading to inflammasome assembly and activation. Palmitoylation at Cys-130 and Cys-957 by ZDHHC1 facilitates phosphorylation at Ser-265 by LATS1 and LATS2, promoting its relocalization to the microtubule organizing center (MTOC), where NLRP3 is activated by NEK7, leading to inflammasome assembly and activation. Depalmitoylated by ABHD17A. Degraded via selective autophagy following interaction with IRGM. IRGM promotes NLRP3 recruitment to autophagosome membranes, promoting its SQSTM1/p62-dependent autophagy-dependent degradation. Highly expressed in oocyte, testis, spleen, thymus and kidney.

The protein resides in the cytoplasm. It is found in the cytosol. It localises to the inflammasome. The protein localises to the cytoskeleton. Its subcellular location is the microtubule organizing center. The protein resides in the golgi apparatus membrane. It is found in the endoplasmic reticulum. It localises to the mitochondrion. The protein localises to the secreted. Its subcellular location is the nucleus. It catalyses the reaction ATP + H2O = ADP + phosphate + H(+). Its activity is regulated as follows. Under resting conditions, NLRP3 binds ADP and is autoinhibited. Inactive NLRP3 forms homodecameric double-ring cages that hide pyrin domains within NACHT-LRR rings to avoid premature activation. NLRP3 activation stimuli include extracellular ATP, nigericin, reactive oxygen species, crystals of monosodium urate or cholesterol, amyloid-beta fibers, environmental or industrial particles and nanoparticles, such as asbestos, silica, aluminum salts, cytosolic dsRNA, etc. Almost all stimuli trigger intracellular K(+) efflux. These stimuli lead to membrane perturbations that induce activation of NLRP3. Upon activation, NLRP3 is transported to microtubule organizing center (MTOC), where it is unlocked by NEK7, leading to its relocalization to dispersed trans-Golgi network (dTGN) vesicle membranes and recruitment of PYCARD/ASC for the formation of an active inflammasome complex. NEK7-activated NLRP3 forms a disk-shaped inflammasome. NLRP3 and PYCARD/ASC interact via their respective pyrin domains; interaction initiates speck formation (nucleation) which greatly enhances further addition of soluble PYCARD/ASC molecules to the speck in a prion-like polymerization process. Clustered PYCARD/ASC nucleates the formation of CASP1 filaments through the interaction of their respective CARD domains, acting as a platform for CASP1 polymerization and activation. Active CASP1 then processes IL1B and IL18 precursors, leading to the release of mature cytokines in the extracellular milieu and inflammatory response. NLRP3 inflammasome assembly is inhibited by IRGM, which impedes NLRP3 oligomerization. NLRP3 inflammasome is inhibited by cyclic AMP (cAMP), which directly binds NLRP3; inhibition is relieved by calcium-sensing receptor CASR, which inhibits production of cAMP. Specifically inhibited by sulfonylurea MCC950 (also named CP-456,773, CRID3), a potent and specific small-molecule inhibitor of the NLRP3 inflammasome that acts by preventing ATP hydrolysis. Sensor component of the NLRP3 inflammasome, which mediates inflammasome activation in response to defects in membrane integrity, leading to secretion of inflammatory cytokines IL1B and IL18 and pyroptosis. In response to pathogens and other damage-associated signals that affect the integrity of membranes, initiates the formation of the inflammasome polymeric complex composed of NLRP3, CASP1 and PYCARD/ASC. Recruitment of pro-caspase-1 (proCASP1) to the NLRP3 inflammasome promotes caspase-1 (CASP1) activation, which subsequently cleaves and activates inflammatory cytokines IL1B and IL18 and gasdermin-D (GSDMD), promoting cytokine secretion and pyroptosis. Activation of NLRP3 inflammasome is also required for HMGB1 secretion; stimulating inflammatory responses. Under resting conditions, ADP-bound NLRP3 is autoinhibited. NLRP3 activation stimuli include extracellular ATP, nigericin, reactive oxygen species, crystals of monosodium urate or cholesterol, amyloid-beta fibers, environmental or industrial particles and nanoparticles, such as asbestos, silica, aluminum salts, cytosolic dsRNA, etc. Almost all stimuli trigger intracellular K(+) efflux. These stimuli lead to membrane perturbation and activation of NLRP3. Upon activation, NLRP3 is transported to microtubule organizing center (MTOC), where it is unlocked by NEK7, leading to its relocalization to dispersed trans-Golgi network (dTGN) vesicle membranes and formation of an active inflammasome complex. Associates with dTGN vesicle membranes by binding to phosphatidylinositol 4-phosphate (PtdIns4P). Shows ATPase activity. Its function is as follows. Independently of inflammasome activation, regulates the differentiation of T helper 2 (Th2) cells and has a role in Th2 cell-dependent asthma and tumor growth. During Th2 differentiation, required for optimal IRF4 binding to IL4 promoter and for IRF4-dependent IL4 transcription. Binds to the consensus DNA sequence 5'-GRRGGNRGAG-3'. May also participate in the transcription of IL5, IL13, GATA3, CCR3, CCR4 and MAF. The polypeptide is NACHT, LRR and PYD domains-containing protein 3 (NLRP3) (Macaca mulatta (Rhesus macaque)).